The primary structure comprises 90 residues: HssA/B-like protein 4 (90 aa).

Belongs to the hssA/B family.

The sequence is that of HssA/B-like protein 4 (hssl4) from Dictyostelium discoideum (Social amoeba).